Reading from the N-terminus, the 293-residue chain is Lysosomal amino acid transporter 1 homolog (293 aa).

The Lumenal portion of the chain corresponds to Met1–Ala37. N-linked (GlcNAc...) asparagine glycosylation is found at Asn10 and Asn16. One can recognise a PQ-loop 1 domain in the interval Trp34–Tyr100. The chain crosses the membrane as a helical span at residues Ser38–Ile58. At Lys59–Ser71 the chain is on the cytoplasmic side. Residues Leu72 to Ala92 traverse the membrane as a helical segment. At Asp93 to Pro96 the chain is on the lumenal side. The helical transmembrane segment at Leu97–Phe117 threads the bilayer. At His118–Pro127 the chain is on the cytoplasmic side. A helical membrane pass occupies residues Leu128–Leu148. Residues Leu149–Val182 are Lumenal-facing. Residues Ile183–Ile203 traverse the membrane as a helical segment. The 53-residue stretch at Ser191–Gln243 folds into the PQ-loop 2 domain. Residues Arg204–Gly214 are Cytoplasmic-facing. Residues Ile215–Leu235 form a helical membrane-spanning segment. Residues Leu236–Pro254 are Lumenal-facing. Residues Trp255–Val275 form a helical membrane-spanning segment. The Cytoplasmic portion of the chain corresponds to Tyr276–Ser293. The Di-leucine motif signature appears at Leu290 to Leu291.

Belongs to the laat-1 family. In terms of tissue distribution, ubiquitously expressed.

The protein localises to the lysosome membrane. Its function is as follows. Amino acid transporter that specifically mediates the pH-dependent export of the cationic amino acids arginine, histidine and lysine from lysosomes. The protein is Lysosomal amino acid transporter 1 homolog of Mus musculus (Mouse).